The primary structure comprises 117 residues: Pancreatic progenitor cell differentiation and proliferation factor A (117 aa).

A disordered region spans residues 22–46; that stretch reads GSTSSNSSCSSSEYTGEVIPHPPGL. Low complexity predominate over residues 23–33; it reads STSSNSSCSSS.

It belongs to the PPDPF family. Expressed exclusively in the exocrine cells during pancreas development.

In terms of biological role, probable regulator of exocrine pancreas development. The protein is Pancreatic progenitor cell differentiation and proliferation factor A (ppdpfa) of Danio rerio (Zebrafish).